Consider the following 468-residue polypeptide: UDP-N-acetylmuramate--L-alanine ligase (468 aa).

112 to 118 (GTHGKTT) is a binding site for ATP.

This sequence belongs to the MurCDEF family.

The protein localises to the cytoplasm. The enzyme catalyses UDP-N-acetyl-alpha-D-muramate + L-alanine + ATP = UDP-N-acetyl-alpha-D-muramoyl-L-alanine + ADP + phosphate + H(+). Its pathway is cell wall biogenesis; peptidoglycan biosynthesis. In terms of biological role, cell wall formation. In Bordetella bronchiseptica (strain ATCC BAA-588 / NCTC 13252 / RB50) (Alcaligenes bronchisepticus), this protein is UDP-N-acetylmuramate--L-alanine ligase.